The primary structure comprises 102 residues: Small ribosomal subunit protein eS24 (102 aa).

It belongs to the eukaryotic ribosomal protein eS24 family.

This chain is Small ribosomal subunit protein eS24, found in Methanococcus maripaludis (strain C7 / ATCC BAA-1331).